Here is a 204-residue protein sequence, read N- to C-terminus: Peptide deformylase (204 aa).

Residues Cys131 and His174 each coordinate Fe cation. The active site involves Glu175. Residue His178 coordinates Fe cation.

It belongs to the polypeptide deformylase family. Fe(2+) is required as a cofactor.

The enzyme catalyses N-terminal N-formyl-L-methionyl-[peptide] + H2O = N-terminal L-methionyl-[peptide] + formate. Removes the formyl group from the N-terminal Met of newly synthesized proteins. Requires at least a dipeptide for an efficient rate of reaction. N-terminal L-methionine is a prerequisite for activity but the enzyme has broad specificity at other positions. This Streptococcus pyogenes serotype M49 (strain NZ131) protein is Peptide deformylase.